Here is a 293-residue protein sequence, read N- to C-terminus: Urease accessory protein UreD 2 (293 aa).

It belongs to the UreD family. In terms of assembly, ureD, UreF and UreG form a complex that acts as a GTP-hydrolysis-dependent molecular chaperone, activating the urease apoprotein by helping to assemble the nickel containing metallocenter of UreC. The UreE protein probably delivers the nickel.

The protein resides in the cytoplasm. Required for maturation of urease via the functional incorporation of the urease nickel metallocenter. This Streptomyces griseus subsp. griseus (strain JCM 4626 / CBS 651.72 / NBRC 13350 / KCC S-0626 / ISP 5235) protein is Urease accessory protein UreD 2.